The chain runs to 97 residues: Large ribosomal subunit protein bL31B (97 aa).

It belongs to the bacterial ribosomal protein bL31 family. Type B subfamily. As to quaternary structure, part of the 50S ribosomal subunit.

The chain is Large ribosomal subunit protein bL31B (rpmE2) from Mycolicibacterium paratuberculosis (strain ATCC BAA-968 / K-10) (Mycobacterium paratuberculosis).